The primary structure comprises 313 residues: tRNA pseudouridine synthase B (313 aa).

Asp-48 (nucleophile) is an active-site residue.

Belongs to the pseudouridine synthase TruB family. Type 1 subfamily.

It catalyses the reaction uridine(55) in tRNA = pseudouridine(55) in tRNA. In terms of biological role, responsible for synthesis of pseudouridine from uracil-55 in the psi GC loop of transfer RNAs. The chain is tRNA pseudouridine synthase B from Saccharophagus degradans (strain 2-40 / ATCC 43961 / DSM 17024).